Reading from the N-terminus, the 504-residue chain is Apolipoprotein N-acyltransferase (504 aa).

6 helical membrane passes run 6–26 (LALT…YALV), 47–67 (ALYG…WVFV), 83–103 (LTAL…WLGV), 105–125 (AGGG…WVVT), 153–173 (IAPV…AGLL), and 186–206 (FALL…KVQW). Positions 219-457 (LQGNVPQDQK…REALTGMMQP (239 aa)) constitute a CN hydrolase domain. Glutamate 258 acts as the Proton acceptor in catalysis. Lysine 317 is a catalytic residue. Cysteine 369 functions as the Nucleophile in the catalytic mechanism. A helical transmembrane segment spans residues 465 to 485 (ALWGDWPAIGLCAGIVGICFA).

The protein belongs to the CN hydrolase family. Apolipoprotein N-acyltransferase subfamily.

It is found in the cell inner membrane. It carries out the reaction N-terminal S-1,2-diacyl-sn-glyceryl-L-cysteinyl-[lipoprotein] + a glycerophospholipid = N-acyl-S-1,2-diacyl-sn-glyceryl-L-cysteinyl-[lipoprotein] + a 2-acyl-sn-glycero-3-phospholipid + H(+). It participates in protein modification; lipoprotein biosynthesis (N-acyl transfer). Its function is as follows. Catalyzes the phospholipid dependent N-acylation of the N-terminal cysteine of apolipoprotein, the last step in lipoprotein maturation. This chain is Apolipoprotein N-acyltransferase, found in Methylococcus capsulatus (strain ATCC 33009 / NCIMB 11132 / Bath).